Here is a 205-residue protein sequence, read N- to C-terminus: Thiamine-phosphate synthase (205 aa).

4-amino-2-methyl-5-(diphosphooxymethyl)pyrimidine-binding positions include 37-41 (QVREK) and Asn69. Positions 70 and 89 each coordinate Mg(2+). Ser108 is a binding site for 4-amino-2-methyl-5-(diphosphooxymethyl)pyrimidine. Residue 134-136 (TGS) coordinates 2-[(2R,5Z)-2-carboxy-4-methylthiazol-5(2H)-ylidene]ethyl phosphate. Lys137 provides a ligand contact to 4-amino-2-methyl-5-(diphosphooxymethyl)pyrimidine. 2-[(2R,5Z)-2-carboxy-4-methylthiazol-5(2H)-ylidene]ethyl phosphate contacts are provided by residues Gly165 and 185-186 (IS).

Belongs to the thiamine-phosphate synthase family. The cofactor is Mg(2+).

The catalysed reaction is 2-[(2R,5Z)-2-carboxy-4-methylthiazol-5(2H)-ylidene]ethyl phosphate + 4-amino-2-methyl-5-(diphosphooxymethyl)pyrimidine + 2 H(+) = thiamine phosphate + CO2 + diphosphate. It catalyses the reaction 2-(2-carboxy-4-methylthiazol-5-yl)ethyl phosphate + 4-amino-2-methyl-5-(diphosphooxymethyl)pyrimidine + 2 H(+) = thiamine phosphate + CO2 + diphosphate. It carries out the reaction 4-methyl-5-(2-phosphooxyethyl)-thiazole + 4-amino-2-methyl-5-(diphosphooxymethyl)pyrimidine + H(+) = thiamine phosphate + diphosphate. Its pathway is cofactor biosynthesis; thiamine diphosphate biosynthesis; thiamine phosphate from 4-amino-2-methyl-5-diphosphomethylpyrimidine and 4-methyl-5-(2-phosphoethyl)-thiazole: step 1/1. Functionally, condenses 4-methyl-5-(beta-hydroxyethyl)thiazole monophosphate (THZ-P) and 2-methyl-4-amino-5-hydroxymethyl pyrimidine pyrophosphate (HMP-PP) to form thiamine monophosphate (TMP). This chain is Thiamine-phosphate synthase, found in Clostridium botulinum (strain 657 / Type Ba4).